Reading from the N-terminus, the 492-residue chain is Proline--tRNA ligase (492 aa).

Belongs to the class-II aminoacyl-tRNA synthetase family. ProS type 3 subfamily. As to quaternary structure, homodimer.

Its subcellular location is the cytoplasm. It catalyses the reaction tRNA(Pro) + L-proline + ATP = L-prolyl-tRNA(Pro) + AMP + diphosphate. Its function is as follows. Catalyzes the attachment of proline to tRNA(Pro) in a two-step reaction: proline is first activated by ATP to form Pro-AMP and then transferred to the acceptor end of tRNA(Pro). The sequence is that of Proline--tRNA ligase from Flavobacterium psychrophilum (strain ATCC 49511 / DSM 21280 / CIP 103535 / JIP02/86).